The sequence spans 408 residues: Interferon-activable protein 203 (408 aa).

The Pyrin domain occupies 1 to 87 (MAEYKNIVLL…AKKLKTEKAK (87 aa)). The segment at 84–208 (EKAKVQEKKK…EGHHQGPKQV (125 aa)) is disordered. Residues 92–102 (KKGKCKTAGKK) are compositionally biased toward basic residues. Residues 150 to 159 (AQLPETSGTN) are compositionally biased toward polar residues. Positions 190–388 (TVPKEPSREE…SVRHSYMQVI (199 aa)) constitute an HIN-200 domain.

This sequence belongs to the HIN-200 family. In terms of tissue distribution, constitutively expressed in the thymus, bone marrow and spleen. Isoform 1 and isoform 3 are present in liver (at protein level).

It localises to the nucleus. The polypeptide is Interferon-activable protein 203 (Ifi203) (Mus musculus (Mouse)).